The chain runs to 58 residues: Conotoxin TxXIIIA (58 aa).

The signal sequence occupies residues 1-22 (MRCLPVFVILLLLIASVPSVDA). Residues 23–46 (ELKAKDDMPQASFHDNAERDQQKK) constitute a propeptide that is removed on maturation.

Homodimer; disulfide-linked. Post-translationally, 5 disulfide bonds are present in each homodimer: two intrachain disulfide bonds per subunit, and one interchain disulfide bond linking the two subunits. As to expression, expressed by the venom duct.

The protein resides in the secreted. The sequence is that of Conotoxin TxXIIIA from Conus textile (Cloth-of-gold cone).